Here is a 288-residue protein sequence, read N- to C-terminus: MALFQKKKYIKINPNRSIIEKQAEQPEVPDELFAKCPACKHTIYQKDLGKNKVCPNCDYNFRITAKERLAIVADKDSFVEMFTGIESKNPLDFPGYPEKLAATKARTGLDEAVITGTATIKGQKTALAIMDSTFIMASMGTVVGEKLTRLFEYATTEKLPIIVFTASGGARMQEGIMSLMQMAKTSAAVKRHSNAGLFYITVLTDPTTGGVTASFASLGDIILAEPQSLIGFAGRRVIEQTVRQTLPDDFQKAEFLLNHGFVDAIVKRTELRQKLALLLELHTEVENV.

The CoA carboxyltransferase N-terminal domain occupies 32–288 (LFAKCPACKH…LELHTEVENV (257 aa)). Zn(2+) is bound by residues C36, C39, C54, and C57. The C4-type zinc-finger motif lies at 36 to 57 (CPACKHTIYQKDLGKNKVCPNC).

It belongs to the AccD/PCCB family. Acetyl-CoA carboxylase is a heterohexamer composed of biotin carboxyl carrier protein (AccB), biotin carboxylase (AccC) and two subunits each of ACCase subunit alpha (AccA) and ACCase subunit beta (AccD). It depends on Zn(2+) as a cofactor.

It localises to the cytoplasm. The catalysed reaction is N(6)-carboxybiotinyl-L-lysyl-[protein] + acetyl-CoA = N(6)-biotinyl-L-lysyl-[protein] + malonyl-CoA. It functions in the pathway lipid metabolism; malonyl-CoA biosynthesis; malonyl-CoA from acetyl-CoA: step 1/1. Functionally, component of the acetyl coenzyme A carboxylase (ACC) complex. Biotin carboxylase (BC) catalyzes the carboxylation of biotin on its carrier protein (BCCP) and then the CO(2) group is transferred by the transcarboxylase to acetyl-CoA to form malonyl-CoA. The chain is Acetyl-coenzyme A carboxylase carboxyl transferase subunit beta from Lactococcus lactis subsp. lactis (strain IL1403) (Streptococcus lactis).